Reading from the N-terminus, the 931-residue chain is Isoleucine--tRNA ligase (931 aa).

A 'HIGH' region motif is present at residues Pro58 to His68. Glu559 lines the L-isoleucyl-5'-AMP pocket. The 'KMSKS' region signature appears at Lys600–Ser604. Lys603 contacts ATP. The Zn(2+) site is built by Cys894, Cys897, Cys914, and Cys917.

The protein belongs to the class-I aminoacyl-tRNA synthetase family. IleS type 1 subfamily. As to quaternary structure, monomer. The cofactor is Zn(2+).

It is found in the cytoplasm. It carries out the reaction tRNA(Ile) + L-isoleucine + ATP = L-isoleucyl-tRNA(Ile) + AMP + diphosphate. Its function is as follows. Catalyzes the attachment of isoleucine to tRNA(Ile). As IleRS can inadvertently accommodate and process structurally similar amino acids such as valine, to avoid such errors it has two additional distinct tRNA(Ile)-dependent editing activities. One activity is designated as 'pretransfer' editing and involves the hydrolysis of activated Val-AMP. The other activity is designated 'posttransfer' editing and involves deacylation of mischarged Val-tRNA(Ile). This chain is Isoleucine--tRNA ligase, found in Legionella pneumophila (strain Paris).